We begin with the raw amino-acid sequence, 641 residues long: MGKIIGIDLGTTNSCVSIMDGGKARVIENSEGDRTTPSIVAYTKDGEVLVGASAKRQAVTNPKNTFYAVKRLIGRKFTDGEVQKDISHVPYGILAHDNGDAWVQTSDGKRMAPQEISARVLEKMKKTAEDFLGEKVTEAVITVPAYFNDSQRQATKDAGRIAGLDVKRIINEPTAAALAYGLDKNGGDRKIAVYDLGGGTFDVSIIEIAEVDGEKQFEVLATNGDTFLGGEDFDNRVIEYLVDEFNKDQGIDLRKDPLALQRLKDAAERAKIELSSSQQTEVNLPYVTADASGPKHLNIKLTRAKLEALVEDLVKKSIEPCRTALNDAGLRASDINEVILVGGQTRMPKVQQAVADFFGKEPRKDVNPDEAVAVGAAIQGGVLAGDVKDVLLLDVTPLSLGIETMGGVFTKIIEKNTTIPTKASQTFSTAEDNQSAVTVHVLQGEREQARFNKSLAKFDLSGIEPAPRGMPQVEVSFDIDANGILHVSAKDKKTNKEQKVEIKAGSGLSDEEIQRMVADAEANREEDKKFQELVQARNQADGLIHATRTAITEHGSKVGGDVIGKVEAALSDLETAMKGDDKAQIEARTKTLEEAGQSLYAAAAAAEQGGNADAASGNAQASKAADDVVDAEFTEVKDDKK.

At Thr-200 the chain carries Phosphothreonine; by autocatalysis. The span at 606–623 shows a compositional bias: low complexity; the sequence is AEQGGNADAASGNAQASK. The interval 606-628 is disordered; sequence AEQGGNADAASGNAQASKAADDV.

Belongs to the heat shock protein 70 family.

Its function is as follows. Acts as a chaperone. The polypeptide is Chaperone protein DnaK (Xanthomonas axonopodis pv. citri (strain 306)).